The chain runs to 273 residues: 4-hydroxy-tetrahydrodipicolinate reductase (273 aa).

Residues 12–17 (GAGGRM) and Glu38 contribute to the NAD(+) site. Residue Arg39 participates in NADP(+) binding. NAD(+) contacts are provided by residues 102–104 (GTT) and 126–129 (AANF). His159 functions as the Proton donor/acceptor in the catalytic mechanism. His160 serves as a coordination point for (S)-2,3,4,5-tetrahydrodipicolinate. Residue Lys163 is the Proton donor of the active site. 169–170 (GT) contributes to the (S)-2,3,4,5-tetrahydrodipicolinate binding site.

It belongs to the DapB family. As to quaternary structure, homotetramer.

The protein resides in the cytoplasm. The catalysed reaction is (S)-2,3,4,5-tetrahydrodipicolinate + NAD(+) + H2O = (2S,4S)-4-hydroxy-2,3,4,5-tetrahydrodipicolinate + NADH + H(+). It catalyses the reaction (S)-2,3,4,5-tetrahydrodipicolinate + NADP(+) + H2O = (2S,4S)-4-hydroxy-2,3,4,5-tetrahydrodipicolinate + NADPH + H(+). It participates in amino-acid biosynthesis; L-lysine biosynthesis via DAP pathway; (S)-tetrahydrodipicolinate from L-aspartate: step 4/4. In terms of biological role, catalyzes the conversion of 4-hydroxy-tetrahydrodipicolinate (HTPA) to tetrahydrodipicolinate. The protein is 4-hydroxy-tetrahydrodipicolinate reductase of Escherichia coli O127:H6 (strain E2348/69 / EPEC).